Here is a 70-residue protein sequence, read N- to C-terminus: MKAIIFFCFLSVMVFIVAEASSLEALKIFEGERDCVGENGRCRDWYNDCCDGFYCSCRQPPYCICRNNNG.

Positions 1–20 (MKAIIFFCFLSVMVFIVAEA) are cleaved as a signal peptide. Residues 21–33 (SSLEALKIFEGER) constitute a propeptide that is removed on maturation. Cystine bridges form between Cys35/Cys50, Cys42/Cys55, Cys49/Cys65, and Cys57/Cys63. Asn69 is modified (asparagine amide).

It belongs to the neurotoxin 07 (Beta/delta-agtx) family. 04 (aga-5) subfamily. Expressed by the venom gland.

The protein resides in the secreted. Functionally, insecticidal neurotoxin that modulates the insect Nav channel (DmNaV1/tipE (para/tipE)) in a unique manner, with both the activation and inactivation processes being affected. The voltage dependence of activation is shifted toward more hyperpolarized potentials (analogous to site 4 toxins) and a non-inactivating persistent sodium current is induced (site 3-like action). Interestingly, both effects take place in a voltage-dependent manner, producing a bell-shaped curve between -80 and 0 mV. This Agelena orientalis (Funnel-web spider) protein is Mu-agatoxin-Ao1a.